A 198-amino-acid chain; its full sequence is Cytokinin riboside 5'-monophosphate phosphoribohydrolase (198 aa).

Residues Glu-91, 109-110 (RK), 126-132 (GVGTAEE), and Thr-138 contribute to the substrate site.

The protein belongs to the LOG family.

It catalyses the reaction N(6)-(dimethylallyl)adenosine 5'-phosphate + H2O = N(6)-dimethylallyladenine + D-ribose 5-phosphate. It carries out the reaction 9-ribosyl-trans-zeatin 5'-phosphate + H2O = trans-zeatin + D-ribose 5-phosphate. In terms of biological role, catalyzes the hydrolytic removal of ribose 5'-monophosphate from nitrogen N6-modified adenosines, the final step of bioactive cytokinin synthesis. In Rhodococcoides fascians (Rhodococcus fascians), this protein is Cytokinin riboside 5'-monophosphate phosphoribohydrolase (fas6).